A 447-amino-acid chain; its full sequence is Glutamate--tRNA ligase 2 (447 aa).

The 'HIGH' region motif lies at Pro8 to Asn18. Residues Lys239–Arg243 carry the 'KMSKS' region motif. Lys242 provides a ligand contact to ATP.

The protein belongs to the class-I aminoacyl-tRNA synthetase family. Glutamate--tRNA ligase type 1 subfamily. In terms of assembly, monomer.

It is found in the cytoplasm. The enzyme catalyses tRNA(Glu) + L-glutamate + ATP = L-glutamyl-tRNA(Glu) + AMP + diphosphate. In terms of biological role, catalyzes the attachment of glutamate to tRNA(Glu) in a two-step reaction: glutamate is first activated by ATP to form Glu-AMP and then transferred to the acceptor end of tRNA(Glu). This is Glutamate--tRNA ligase 2 from Granulibacter bethesdensis (strain ATCC BAA-1260 / CGDNIH1).